A 363-amino-acid chain; its full sequence is mRNA decay activator protein ZFP36L2-A (363 aa).

An RNA-binding motif is present at residues 131-136; sequence RYKTEL. C3H1-type zinc fingers lie at residues 131 to 159 and 169 to 197; these read RYKT…HGFH and KYKT…HNAE. The segment at 148-189 is RNA-binding; sequence YGEKCQFAHGFHELRSLTRHPKYKTELCRTFHTIGFCPYGPR. A disordered region spans residues 308 to 349; sequence ESPVFDAPPSPPDSLSDRDSYLSGSLSSGSLSGSDSPTLDSN. Low complexity predominate over residues 328–347; sequence YLSGSLSSGSLSGSDSPTLD.

Post-translationally, phosphorylated. In terms of tissue distribution, widely expressed in adults.

It localises to the nucleus. The protein localises to the cytoplasm. Its function is as follows. Zinc-finger RNA-binding protein that destabilizes several cytoplasmic AU-rich element (ARE)-containing mRNA transcripts by promoting their poly(A) tail removal or deadenylation, and hence provide a mechanism for attenuating protein synthesis. Acts as a 3'-untranslated region (UTR) ARE mRNA-binding adapter protein to communicate signaling events to the mRNA decay machinery. Functions by recruiting the CCR4-NOT deadenylase complex and probably other components of the cytoplasmic RNA decay machinery to the bound ARE-containing mRNAs, and hence promotes ARE-mediated mRNA deadenylation and decay processes. Binds to 3'-UTR ARE of numerous mRNAs. Also induces the degradation of ARE-containing mRNAs even in absence of poly(A) tail. Required for tubulogenesis during pronephros development. The sequence is that of mRNA decay activator protein ZFP36L2-A (zfp36l2-A) from Xenopus laevis (African clawed frog).